The chain runs to 325 residues: NADH-quinone oxidoreductase subunit H (325 aa).

The next 8 membrane-spanning stretches (helical) occupy residues Val11–Leu31, Met81–Val101, Ile114–Gly134, Ala149–Ala169, Met186–Val206, Phe237–Phe257, Leu265–Ile285, and Ile304–Ala324.

It belongs to the complex I subunit 1 family. In terms of assembly, NDH-1 is composed of 13 different subunits. Subunits NuoA, H, J, K, L, M, N constitute the membrane sector of the complex.

It localises to the cell inner membrane. It catalyses the reaction a quinone + NADH + 5 H(+)(in) = a quinol + NAD(+) + 4 H(+)(out). Its function is as follows. NDH-1 shuttles electrons from NADH, via FMN and iron-sulfur (Fe-S) centers, to quinones in the respiratory chain. The immediate electron acceptor for the enzyme in this species is believed to be ubiquinone. Couples the redox reaction to proton translocation (for every two electrons transferred, four hydrogen ions are translocated across the cytoplasmic membrane), and thus conserves the redox energy in a proton gradient. This subunit may bind ubiquinone. The polypeptide is NADH-quinone oxidoreductase subunit H (Photorhabdus laumondii subsp. laumondii (strain DSM 15139 / CIP 105565 / TT01) (Photorhabdus luminescens subsp. laumondii)).